The following is a 369-amino-acid chain: Delta(6)-protoilludene synthase STEHIDRAFT_73029 (369 aa).

Mg(2+) is bound by residues Asp-107, Asn-243, Ser-247, and Glu-251. Positions Asp-107–Asp-111 match the D(D/E)XX(D/E) motif motif. The short motif at Asn-243–Glu-251 is the NSE motif element. (2E,6E)-farnesyl diphosphate is bound by residues Arg-333 and Tyr-334.

It belongs to the terpene synthase family. The cofactor is Mg(2+). Mn(2+) is required as a cofactor. It depends on Ca(2+) as a cofactor. Ni(2+) serves as cofactor. Requires Co(2+) as cofactor.

The enzyme catalyses (2E,6E)-farnesyl diphosphate = Delta(6)-protoilludene + diphosphate. It carries out the reaction (2E,6E)-farnesyl diphosphate = alpha-selinene + diphosphate. With respect to regulation, ca(2+) switches the cyclization mechanism of delta(6)-protoilludene synthase from 1,11 to 1,10 cyclization which leads to the production of beta-elemene. Functionally, terpene cyclase that catalyzes the cyclization of farnesyl diphosphate (FPP) to delta(6)-protoilludene. In presence of Ca(2+), a significant switch from 1,11 to a dual 1,11/1,10 cyclization occurs, producing beta-elemene as the major product, with lower levels of delta(6)-protoilludene and (E)-beta-caryophyllene, and traces of beta-selinene and alpha-selinene. The sequence is that of Delta(6)-protoilludene synthase STEHIDRAFT_73029 from Stereum hirsutum (strain FP-91666) (White-rot fungus).